Reading from the N-terminus, the 380-residue chain is MDFNLNDEQELFVAGIRELMASENWEAYFAECDRDSIYPERFVKALAEMGIDSLLIPEEHGGLDAGFVTVAAVWMELGRLGAPTYVLYQLPGGFNTFLREGTQEQIDKIMAFRGTGKQMWNSAITEPGAGSDVGSLKTTYTRKNGKVYLNGSKCFITSSAYTPYIVVMARDGASPDKPVYTEWFVDMSKPGIKVTKLEKLGLRMDSCCEITFDEVELDEKDRFGREGNGFNRVKEEFDHERFLVALTNYGTAMCAFEDAARYANQRVQFGETIGRFQLIQEKFAHMAIKLNAMKNMLLEAAWKADNGTITSGDAAMCKYFCANAAFEVVDSAMQVLGGVGIAGNHRISRFWRDLRVDRVSGGSDEMQILTLGRAVLKQYR.

This sequence belongs to the acyl-CoA dehydrogenase family. As to quaternary structure, homotetramer. Requires FAD as cofactor.

It localises to the cytoplasm. The enzyme catalyses 4-(trimethylamino)butanoyl-CoA + oxidized [electron-transfer flavoprotein] + H(+) = crotonobetainyl-CoA + reduced [electron-transfer flavoprotein]. It participates in amine and polyamine metabolism; carnitine metabolism. Functionally, catalyzes the reduction of crotonobetainyl-CoA to gamma-butyrobetainyl-CoA. In Salmonella arizonae (strain ATCC BAA-731 / CDC346-86 / RSK2980), this protein is Crotonobetainyl-CoA reductase.